A 260-amino-acid polypeptide reads, in one-letter code: NH(3)-dependent NAD(+) synthetase (260 aa).

31–38 (GLSGGLDS) lines the ATP pocket. Asp37 is a Mg(2+) binding site. Arg112 is a binding site for deamido-NAD(+). Thr132 contributes to the ATP binding site. Glu137 contacts Mg(2+). Residues Lys161 and Ser183 each coordinate ATP.

It belongs to the NAD synthetase family. As to quaternary structure, homodimer.

It catalyses the reaction deamido-NAD(+) + NH4(+) + ATP = AMP + diphosphate + NAD(+) + H(+). It functions in the pathway cofactor biosynthesis; NAD(+) biosynthesis; NAD(+) from deamido-NAD(+) (ammonia route): step 1/1. Its function is as follows. Catalyzes the ATP-dependent amidation of deamido-NAD to form NAD. Uses ammonia as a nitrogen source. The polypeptide is NH(3)-dependent NAD(+) synthetase (Helicobacter pylori (strain J99 / ATCC 700824) (Campylobacter pylori J99)).